Here is a 601-residue protein sequence, read N- to C-terminus: Transcription factor Ken (601 aa).

One can recognise a BTB domain in the interval 33 to 101; sequence ADLTIVCENK…LYSGQTCITS (69 aa). Disordered stretches follow at residues 188–276, 331–365, and 471–491; these read AAEC…TINP, LSDG…DNQP, and DHPE…AGSN. Basic and acidic residues-rich tracts occupy residues 190-200 and 207-216; these read ECERSGGHNNK and CTHKDNKSDK. Residues 223–234 are compositionally biased toward polar residues; it reads NLSNAPPSGTSG. Positions 235-247 are enriched in low complexity; the sequence is SNSNISTSSNHQQ. Residues 248-258 are compositionally biased toward basic residues; that stretch reads QQHHHHHHHNH. Over residues 259 to 275 the composition is skewed to low complexity; the sequence is NNNNNNNNNNSSSSTIN. A compositionally biased stretch (low complexity) spans 476–490; that stretch reads RSGSASGSGANLAGS. 3 consecutive C2H2-type zinc fingers follow at residues 500–522, 528–551, and 567–590; these read YRCE…LRVH, FACR…CSVH, and YSCC…SGHH.

As to expression, expressed from stage 5 in two rather faint stripes at positions of 64% (anterior domain; AD) and 17% (posterior domain; PD) egg length. During early gastrulation, at stage 6, these two stripes become more evident and detectable at the region posterior to the cephalic furrow and in the hindgut primordium. The AD disappears as gastrulation proceeds, while the PD remains. At stage 15, the AD appears again in the foregut, and PD expression in the hindgut and anal pad. In imaginal disks, it is ubiquitously expressed in both males and females in genital and eye-antennal disks. Not expressed in the brain. In genital disks, it is expressed along the margin of the anterior bulbus in males, while in females it is expressed in the posterior compartment along the anterior-posterior border, with medial expansion in the most posterior region.

The protein resides in the nucleus. Its function is as follows. Transcription factor required for terminalia development. Negative regulator of the JAK/STAT pathway: represses JAK/STAT-dependent expression of ventral veins lacking (vvl) in the posterior spiracles. The protein is Transcription factor Ken (ken) of Drosophila melanogaster (Fruit fly).